Reading from the N-terminus, the 429-residue chain is C4-dicarboxylate transport protein (429 aa).

A run of 8 helical transmembrane segments spans residues 9 to 29, 45 to 65, 79 to 99, 149 to 169, 185 to 205, 223 to 243, 308 to 328, and 356 to 376; these read VLYV…HFYP, LIKM…IAGM, LLYF…ATHI, GEIL…AHLG, VLFG…FGAM, LIGT…GTIA, IYMT…LTWM, and AATL…ILGI.

Belongs to the dicarboxylate/amino acid:cation symporter (DAACS) (TC 2.A.23) family.

It localises to the cell inner membrane. Responsible for the transport of dicarboxylates such as succinate, fumarate, and malate from the periplasm across the membrane. The chain is C4-dicarboxylate transport protein from Burkholderia ambifaria (strain MC40-6).